Reading from the N-terminus, the 221-residue chain is ATP-dependent dethiobiotin synthetase BioD (221 aa).

Residue 11–16 coordinates ATP; sequence DVGKTF. T15 lines the Mg(2+) pocket. Residue K35 is part of the active site. T39 serves as a coordination point for substrate. Residues D44 and 103–106 contribute to the ATP site; that span reads EGAG. Residues D44 and E103 each contribute to the Mg(2+) site.

This sequence belongs to the dethiobiotin synthetase family. As to quaternary structure, homodimer. Mg(2+) is required as a cofactor.

It is found in the cytoplasm. It carries out the reaction (7R,8S)-7,8-diammoniononanoate + CO2 + ATP = (4R,5S)-dethiobiotin + ADP + phosphate + 3 H(+). Its pathway is cofactor biosynthesis; biotin biosynthesis; biotin from 7,8-diaminononanoate: step 1/2. Functionally, catalyzes a mechanistically unusual reaction, the ATP-dependent insertion of CO2 between the N7 and N8 nitrogen atoms of 7,8-diaminopelargonic acid (DAPA, also called 7,8-diammoniononanoate) to form a ureido ring. This is ATP-dependent dethiobiotin synthetase BioD from Leptospira interrogans serogroup Icterohaemorrhagiae serovar copenhageni (strain Fiocruz L1-130).